The sequence spans 639 residues: Chaperone protein DnaK (639 aa).

Position 198 is a phosphothreonine; by autocatalysis (Thr-198). Residues 597 to 639 (AYSAGQSAEGAPHAAGAEASAQSRTDDGVVDADFEEVDEKKGH) form a disordered region. A compositionally biased stretch (low complexity) spans 603-617 (SAEGAPHAAGAEASA). Residues 624 to 633 (GVVDADFEEV) are compositionally biased toward acidic residues.

Belongs to the heat shock protein 70 family.

Acts as a chaperone. The chain is Chaperone protein DnaK from Rhodospirillum rubrum (strain ATCC 11170 / ATH 1.1.1 / DSM 467 / LMG 4362 / NCIMB 8255 / S1).